The following is a 369-amino-acid chain: Methionine import ATP-binding protein MetN (369 aa).

The ABC transporter domain occupies 31 to 266 (VEMKDVRRMF…PQSPVTQSML (236 aa)). 63-70 (GRSGAGKS) contacts ATP.

This sequence belongs to the ABC transporter superfamily. Methionine importer (TC 3.A.1.24) family. The complex is composed of two ATP-binding proteins (MetN), two transmembrane proteins (MetI) and a solute-binding protein (MetQ).

It is found in the cell inner membrane. It carries out the reaction L-methionine(out) + ATP + H2O = L-methionine(in) + ADP + phosphate + H(+). The catalysed reaction is D-methionine(out) + ATP + H2O = D-methionine(in) + ADP + phosphate + H(+). Its function is as follows. Part of the ABC transporter complex MetNIQ involved in methionine import. Responsible for energy coupling to the transport system. The protein is Methionine import ATP-binding protein MetN of Brucella abortus (strain 2308).